The following is a 541-amino-acid chain: MEALLEGIQNRGHGGGFLTSCEAELQELMKQIDIMVAHKKSEWEGRTHALETCLKIREQELKSLRSQLDVTHKEVGMLHQQVEEHEKIKQEMTMEYKQELKKLHEELGILKRSYEKLQKKQMREFRGNTKNHREDRSEIERLTAKIEEFRQKSLDWEKQRLIYQQQVSSLEAQRKALAEQSEIIQAQLANRKQKLESVELSSQSEIQHLSSKLERANDTICANELEIERLTMRVNDLVGTSMTVLQEQQQKEEKLRESEKLLEALQEEKRELKAALQSQENLIHEARIQKEKLQEKVKATDTQHAVEAIRPREESPAEKKYTSQGQGDLDSVLFQLNFTHTSEDLLQAEVTRLEGSLESVSATCKQLSQELMEKYEELKRMEAHNNEYKAEIKKLKEQILQGEQSYSSALEGMKMEISHLTQELHQRDITIASTKGSSSDMEKRLRAEMQKAEDKAVEHKEILDQLESLKLENRHLSEMVMKLELGLHECSLPVSPLGSIATRFLEEEELRSHHILERLDAHIEELKRESEKTVRQFTALK.

An N-acetylmethionine modification is found at Met1. Coiled coils occupy residues 22-199 (EAEL…ESVE) and 242-305 (MTVL…TQHA). Residue Ser278 is modified to Phosphoserine. A disordered region spans residues 294–324 (QEKVKATDTQHAVEAIRPREESPAEKKYTSQ). A compositionally biased stretch (basic and acidic residues) spans 307-321 (EAIRPREESPAEKKY). Coiled-coil stretches lie at residues 346–485 (LQAE…KLEL) and 514–541 (HILERLDAHIEELKRESEKTVRQFTALK).

It belongs to the CEP63 family. As to quaternary structure, interacts with CEP152 and CDK1; these interactions recruit both ligands to centrosomes. Interacts with CDK2, CDK5RAP2, WDR62, CEP90, KIAA0753/moonraker and CCDC14. CEP63, CDK5RAP2, CEP152, WDR62 are proposed to form a stepwise assembled complex at the centrosome forming a ring near parental centrioles. Interacts with CCDC57; the interaction is required for their location to proximal end of centrioles. Interacts with FXR1; promoting its stabilization. In terms of processing, polyubiquitinated via 'Lys-48'-linked ubiquitin, leading to its degradation. Deubiquitinated by USP36, promoting its stabilization.

It localises to the cytoplasm. The protein resides in the cytoskeleton. It is found in the microtubule organizing center. The protein localises to the centrosome. Its subcellular location is the centriole. It localises to the centriolar satellite. Its function is as follows. Required for normal spindle assembly. Plays a key role in mother-centriole-dependent centriole duplication; the function seems also to involve CEP152, CDK5RAP2 and WDR62 through a stepwise assembled complex at the centrosome that recruits CDK2 required for centriole duplication. Reported to be required for centrosomal recruitment of CEP152; however, this function has been questioned. Also recruits CDK1 to centrosomes. Plays a role in DNA damage response. Following DNA damage, such as double-strand breaks (DSBs), is removed from centrosomes; this leads to the inactivation of spindle assembly and delay in mitotic progression. Promotes stabilization of FXR1 protein by inhibiting FXR1 ubiquitination. The chain is Centrosomal protein of 63 kDa (CEP63) from Pongo abelii (Sumatran orangutan).